The sequence spans 424 residues: CinA-like protein (424 aa).

Belongs to the CinA family.

The chain is CinA-like protein from Shewanella baltica (strain OS195).